The chain runs to 471 residues: Argininosuccinate lyase (471 aa).

The protein belongs to the lyase 1 family. Argininosuccinate lyase subfamily.

Its subcellular location is the cytoplasm. The catalysed reaction is 2-(N(omega)-L-arginino)succinate = fumarate + L-arginine. It functions in the pathway amino-acid biosynthesis; L-arginine biosynthesis; L-arginine from L-ornithine and carbamoyl phosphate: step 3/3. This is Argininosuccinate lyase from Acidiphilium cryptum (strain JF-5).